Reading from the N-terminus, the 601-residue chain is NADH-ubiquinone oxidoreductase chain 5 (601 aa).

Helical transmembrane passes span 3 to 23, 36 to 56, 84 to 104, 114 to 134, 140 to 160, 171 to 191, 201 to 221, 240 to 260, 272 to 292, 324 to 346, 365 to 385, 404 to 426, 456 to 476, 483 to 503, and 581 to 601; these read LIMP…MMSY, VTSS…MFLL, FFSI…MEFS, INQF…LVTA, LFIG…WWYG, AILY…WLLL, IFML…AAAG, TPVS…FLLV, ILTM…ICAL, AFLH…GSII, MPFT…MPFL, NAWA…TRLI, LALG…PLIT, LYMK…AMGL, and LIKL…MLII.

It belongs to the complex I subunit 5 family.

The protein localises to the mitochondrion inner membrane. It catalyses the reaction a ubiquinone + NADH + 5 H(+)(in) = a ubiquinol + NAD(+) + 4 H(+)(out). Functionally, core subunit of the mitochondrial membrane respiratory chain NADH dehydrogenase (Complex I) that is believed to belong to the minimal assembly required for catalysis. Complex I functions in the transfer of electrons from NADH to the respiratory chain. The immediate electron acceptor for the enzyme is believed to be ubiquinone. The chain is NADH-ubiquinone oxidoreductase chain 5 (MT-ND5) from Dasypus novemcinctus (Nine-banded armadillo).